Here is a 266-residue protein sequence, read N- to C-terminus: Early E1A protein (266 aa).

The tract at residues 39–47 is interaction with RB1 in competition with E2F1; it reads PSLYELYDL. An interaction with UBE2I region spans residues 75 to 145; that stretch reads EGLFLPEPPV…AAAAADRERE (71 aa). The short motif at 98-102 is the PXLXP motif, interaction with host ZMYND11 element; it reads PQLHP. Residues 107 to 111 carry the LXCXE motif, interaction with host RB1 and TMEM173/STING motif; it reads LLCYE. A zinc finger lies at 159–179; sequence CKSCEHHRNSTGNTDLMCSLC. The segment at 195-226 is disordered; it reads NEPEPNSTLDGDERPSPPKLGSAVPEGVIKPV. The PXDLS motif, CTBP-binding signature appears at 255–259; that stretch reads PVDLS. The Nuclear localization signal signature appears at 261–265; that stretch reads KRPRC.

It belongs to the adenoviridae E1A protein family. As to quaternary structure, interacts with host UBE2I; this interaction interferes with polySUMOylation. Interacts with host RB1; this interaction induces the aberrant dissociation of RB1-E2F1 complex thereby disrupting the activity of RB1 and activating E2F1-regulated genes. Interacts with host ATF7; the interaction enhances ATF7-mediated viral transactivation activity which requires the zinc binding domains of both proteins. Isoform early E1A 32 kDa protein and isoform early E1A 26 kDa protein interact (via N-terminus) with CUL1 and E3 ubiquitin ligase RBX1; these interactions inhibit RBX1-CUL1-dependent elongation reaction of ubiquitin chains and attenuate ubiquitination of SCF(FBXW7) target proteins. Interacts (via PXLXP motif) with host ZMYND11/BS69 (via MYND-type zinc finger); this interaction inhibits E1A mediated transactivation. Interacts with host EP300; this interaction stimulates the acetylation of RB1 by recruiting EP300 and RB1 into a multimeric-protein complex. Interacts with host CTBP1 and CTBP2; this interaction seems to potentiate viral replication. Interacts with host DCAF7. Interacts with host DYRK1A. Interacts with host KPNA4; this interaction allows E1A import into the host nucleus. Interacts with host EP400; this interaction stabilizes MYC. Interacts with host TBP protein; this interaction probably disrupts the TBP-TATA complex. Interacts (via LXCXE motif) with host TMEM173/STING; this interaction impairs the ability of TMEM173/STING to sense cytosolic DNA and promote the production of type I interferon (IFN-alpha and IFN-beta). Interacts (via C-terminus) with host ZBED1/hDREF (via C-terminus); the interaction is direct.

It is found in the host nucleus. Plays a role in viral genome replication by driving entry of quiescent cells into the cell cycle. Stimulation of progression from G1 to S phase allows the virus to efficiently use the cellular DNA replicating machinery to achieve viral genome replication. E1A protein has both transforming and trans-activating activities. Induces the disassembly of the E2F1 transcription factor from RB1 by direct competition for the same binding site on RB1, with subsequent transcriptional activation of E2F1-regulated S-phase genes and of the E2 region of the adenoviral genome. Release of E2F1 leads to the ARF-mediated inhibition of MDM2 and causes TP53/p53 to accumulate because it is not targeted for degradation by MDM2-mediated ubiquitination anymore. This increase in TP53, in turn, would arrest the cell proliferation and direct its death but this effect is counteracted by the viral protein E1B-55K. Inactivation of the ability of RB1 to arrest the cell cycle is critical for cellular transformation, uncontrolled cellular growth and proliferation induced by viral infection. Interaction with RBX1 and CUL1 inhibits ubiquitination of the proteins targeted by SCF(FBXW7) ubiquitin ligase complex, and may be linked to unregulated host cell proliferation. The tumorigenesis-restraining activity of E1A may be related to the disruption of the host CtBP-CtIP complex through the CtBP binding motif. Interaction with host TMEM173/STING impairs the ability of TMEM173/STING to sense cytosolic DNA and promote the production of type I interferon (IFN-alpha and IFN-beta). Promotes the sumoylation of host ZBED1/hDREF with SUMO1. This chain is Early E1A protein, found in Homo sapiens (Human).